The chain runs to 338 residues: Mitoferrin-1 (338 aa).

The interval 1–37 (MELRRGGVGSQAAGRRMDGDCRDGGCGSKDAGSEDYE) is disordered. 3 Solcar repeats span residues 43 to 131 (ASVS…MKRT), 141 to 225 (NSHL…LQEQ), and 232 to 326 (YNPQ…FKYF). Transmembrane regions (helical) follow at residues 45–64 (VSTH…SIMY), 106–125 (GLNV…FACY), 143–162 (HLAN…AVMN), 200–219 (SYTT…FITY), 234–253 (PQSH…AATT), and 301–320 (GIQA…WSVY).

Belongs to the mitochondrial carrier (TC 2.A.29) family. In terms of assembly, interacts with ACB10; this interaction stabilizes SLC25A37 and enhances the function of SLC25A37 to import mitochondrial iron during erythroid differentiation.

The protein resides in the mitochondrion inner membrane. It carries out the reaction Fe(2+)(in) = Fe(2+)(out). In terms of biological role, mitochondrial iron transporter that specifically mediates iron uptake in developing erythroid cells, thereby playing an essential role in heme biosynthesis. The chain is Mitoferrin-1 (Slc25a37) from Rattus norvegicus (Rat).